The sequence spans 251 residues: MLLIPAIDLKDGQCVRLKQGDMDQATIFSEDPAAMARKWVDLGARRLHLVDLNGAFAGKPKNLEAIEAILGEVGDEIPVQLGGGIRSLETIEKYLDAGLSYVIIGTAAVKDPGFLRDACSAFAGNIIVGLDAKDGKVATDGWSKLTGHEVIDLAQKFEDYGVESIVYTDIGRDGMLQGINIEATVKLAQAVGIPVIASGGLSNIVDIEKLCEVEDEGIEGVICGRAIYSGDLDFAAAQKRADELNGELDDA.

The Proton acceptor role is filled by D8. Catalysis depends on D131, which acts as the Proton donor.

Belongs to the HisA/HisF family.

It localises to the cytoplasm. The catalysed reaction is 1-(5-phospho-beta-D-ribosyl)-5-[(5-phospho-beta-D-ribosylamino)methylideneamino]imidazole-4-carboxamide = 5-[(5-phospho-1-deoxy-D-ribulos-1-ylimino)methylamino]-1-(5-phospho-beta-D-ribosyl)imidazole-4-carboxamide. It participates in amino-acid biosynthesis; L-histidine biosynthesis; L-histidine from 5-phospho-alpha-D-ribose 1-diphosphate: step 4/9. This is 1-(5-phosphoribosyl)-5-[(5-phosphoribosylamino)methylideneamino] imidazole-4-carboxamide isomerase from Burkholderia thailandensis (strain ATCC 700388 / DSM 13276 / CCUG 48851 / CIP 106301 / E264).